The sequence spans 65 residues: Keratin-associated protein 23-1 (65 aa).

As to quaternary structure, interacts with hair keratins.

In the hair cortex, hair keratin intermediate filaments are embedded in an interfilamentous matrix, consisting of hair keratin-associated proteins (KRTAP), which are essential for the formation of a rigid and resistant hair shaft through their extensive disulfide bond cross-linking with abundant cysteine residues of hair keratins. The matrix proteins include the high-sulfur and high-glycine-tyrosine keratins. This is Keratin-associated protein 23-1 (KRTAP23-1) from Homo sapiens (Human).